A 70-amino-acid chain; its full sequence is ATP synthase subunit c (70 aa).

2 helical membrane passes run I4–V24 and F47–V67.

Belongs to the ATPase C chain family. F-type ATPases have 2 components, F(1) - the catalytic core - and F(0) - the membrane proton channel. F(1) has five subunits: alpha(3), beta(3), gamma(1), delta(1), epsilon(1). F(0) has three main subunits: a(1), b(2) and c(10-14). The alpha and beta chains form an alternating ring which encloses part of the gamma chain. F(1) is attached to F(0) by a central stalk formed by the gamma and epsilon chains, while a peripheral stalk is formed by the delta and b chains.

Its subcellular location is the cell membrane. F(1)F(0) ATP synthase produces ATP from ADP in the presence of a proton or sodium gradient. F-type ATPases consist of two structural domains, F(1) containing the extramembraneous catalytic core and F(0) containing the membrane proton channel, linked together by a central stalk and a peripheral stalk. During catalysis, ATP synthesis in the catalytic domain of F(1) is coupled via a rotary mechanism of the central stalk subunits to proton translocation. In terms of biological role, key component of the F(0) channel; it plays a direct role in translocation across the membrane. A homomeric c-ring of between 10-14 subunits forms the central stalk rotor element with the F(1) delta and epsilon subunits. This chain is ATP synthase subunit c, found in Levilactobacillus brevis (strain ATCC 367 / BCRC 12310 / CIP 105137 / JCM 1170 / LMG 11437 / NCIMB 947 / NCTC 947) (Lactobacillus brevis).